The following is an 835-amino-acid chain: Leucine--tRNA ligase (835 aa).

The short motif at 44–54 (PYPSGNIHMGH) is the 'HIGH' region element. A 'KMSKS' region motif is present at residues 587–591 (KMSKS). K590 is an ATP binding site.

Belongs to the class-I aminoacyl-tRNA synthetase family.

It localises to the cytoplasm. It carries out the reaction tRNA(Leu) + L-leucine + ATP = L-leucyl-tRNA(Leu) + AMP + diphosphate. This Lawsonia intracellularis (strain PHE/MN1-00) protein is Leucine--tRNA ligase.